A 601-amino-acid chain; its full sequence is Abscisic acid cluster transcription factor abl7 (601 aa).

A DNA-binding region (zn(2)-C6 fungal-type) is located at residues 13–40; it reads CDECRRRKLKCDRVRPQCGTCALSESEC.

It localises to the nucleus. Transcription factor that regulates the expression of the gene cluster that mediates the biosynthesis of abscisic acid (ABA), a phytohormone that acts antagonistically toward salicylic acid (SA), jasmonic acid (JA) and ethylene (ETH) signaling, to impede plant defense responses. This is Abscisic acid cluster transcription factor abl7 from Leptosphaeria maculans (strain JN3 / isolate v23.1.3 / race Av1-4-5-6-7-8) (Blackleg fungus).